An 89-amino-acid chain; its full sequence is Small ribosomal subunit protein eS25A (89 aa).

The protein belongs to the eukaryotic ribosomal protein eS25 family. As to quaternary structure, component of the small ribosomal subunit (SSU). Mature yeast ribosomes consist of a small (40S) and a large (60S) subunit. The 40S small subunit contains 1 molecule of ribosomal RNA (18S rRNA) and at least 33 different proteins. The large 60S subunit contains 3 rRNA molecules (25S, 5.8S and 5S rRNA) and at least 46 different proteins.

It localises to the cytoplasm. Functionally, component of the ribosome, a large ribonucleoprotein complex responsible for the synthesis of proteins in the cell. The small ribosomal subunit (SSU) binds messenger RNAs (mRNAs) and translates the encoded message by selecting cognate aminoacyl-transfer RNA (tRNA) molecules. The large subunit (LSU) contains the ribosomal catalytic site termed the peptidyl transferase center (PTC), which catalyzes the formation of peptide bonds, thereby polymerizing the amino acids delivered by tRNAs into a polypeptide chain. The nascent polypeptides leave the ribosome through a tunnel in the LSU and interact with protein factors that function in enzymatic processing, targeting, and the membrane insertion of nascent chains at the exit of the ribosomal tunnel. This is Small ribosomal subunit protein eS25A (rps2502) from Schizosaccharomyces pombe (strain 972 / ATCC 24843) (Fission yeast).